The sequence spans 294 residues: 4-hydroxybenzoate octaprenyltransferase (294 aa).

7 consecutive transmembrane segments (helical) span residues 37–57 (LWAMWMAAGGPPGWTLFWIFF), 101–121 (LAVAAVLALIALALILPLNAL), 142–162 (FFAIPQAYLGIAFGFGIPMAF), 169–189 (VPFVAWLMLLANVFWAIAYDT), 219–239 (IMICYAVFLGLMAWAGSLLGL), 241–261 (WPYYAGLVAAAGMAGYHYTLI), and 271–293 (AAFRHNNWLGACVFAGTFVAYLL).

This sequence belongs to the UbiA prenyltransferase family. Mg(2+) is required as a cofactor.

It is found in the cell inner membrane. It carries out the reaction all-trans-octaprenyl diphosphate + 4-hydroxybenzoate = 4-hydroxy-3-(all-trans-octaprenyl)benzoate + diphosphate. The protein operates within cofactor biosynthesis; ubiquinone biosynthesis. In terms of biological role, catalyzes the prenylation of para-hydroxybenzoate (PHB) with an all-trans polyprenyl group. Mediates the second step in the final reaction sequence of ubiquinone-8 (UQ-8) biosynthesis, which is the condensation of the polyisoprenoid side chain with PHB, generating the first membrane-bound Q intermediate 3-octaprenyl-4-hydroxybenzoate. In Cupriavidus metallidurans (strain ATCC 43123 / DSM 2839 / NBRC 102507 / CH34) (Ralstonia metallidurans), this protein is 4-hydroxybenzoate octaprenyltransferase.